Reading from the N-terminus, the 337-residue chain is 1-aminocyclopropane-1-carboxylate deaminase (337 aa).

Lys-50 is subject to N6-(pyridoxal phosphate)lysine. Ser-77 (nucleophile) is an active-site residue.

Belongs to the ACC deaminase/D-cysteine desulfhydrase family. Homotrimer. The cofactor is pyridoxal 5'-phosphate.

It carries out the reaction 1-aminocyclopropane-1-carboxylate + H2O = 2-oxobutanoate + NH4(+). Catalyzes a cyclopropane ring-opening reaction, the irreversible conversion of 1-aminocyclopropane-1-carboxylate (ACC) to ammonia and alpha-ketobutyrate. Allows growth on ACC as a nitrogen source. The protein is 1-aminocyclopropane-1-carboxylate deaminase of Rhizobium rhizogenes (strain K84 / ATCC BAA-868) (Agrobacterium radiobacter).